Reading from the N-terminus, the 415-residue chain is 8-amino-7-oxononanoate synthase (415 aa).

Residue R21 coordinates substrate. Residue 117 to 118 coordinates pyridoxal 5'-phosphate; it reads GY. Residue H149 coordinates substrate. 3 residues coordinate pyridoxal 5'-phosphate: S195, H223, and T251. K254 is modified (N6-(pyridoxal phosphate)lysine). T374 contacts substrate.

It belongs to the class-II pyridoxal-phosphate-dependent aminotransferase family. BioF subfamily. Homodimer. The cofactor is pyridoxal 5'-phosphate.

It catalyses the reaction 6-carboxyhexanoyl-[ACP] + L-alanine + H(+) = (8S)-8-amino-7-oxononanoate + holo-[ACP] + CO2. The protein operates within cofactor biosynthesis; biotin biosynthesis. In terms of biological role, catalyzes the decarboxylative condensation of pimeloyl-[acyl-carrier protein] and L-alanine to produce 8-amino-7-oxononanoate (AON), [acyl-carrier protein], and carbon dioxide. This Ralstonia pickettii (strain 12J) protein is 8-amino-7-oxononanoate synthase.